A 932-amino-acid chain; its full sequence is Isoleucine--tRNA ligase (932 aa).

Residues 57-67 carry the 'HIGH' region motif; sequence PYANGDIHMGH. Glu556 lines the L-isoleucyl-5'-AMP pocket. A 'KMSKS' region motif is present at residues 597 to 601; the sequence is KMSKS. Residue Lys600 participates in ATP binding. Cys891, Cys894, Cys911, and Cys914 together coordinate Zn(2+).

It belongs to the class-I aminoacyl-tRNA synthetase family. IleS type 1 subfamily. As to quaternary structure, monomer. Zn(2+) serves as cofactor.

The protein localises to the cytoplasm. It catalyses the reaction tRNA(Ile) + L-isoleucine + ATP = L-isoleucyl-tRNA(Ile) + AMP + diphosphate. Functionally, catalyzes the attachment of isoleucine to tRNA(Ile). As IleRS can inadvertently accommodate and process structurally similar amino acids such as valine, to avoid such errors it has two additional distinct tRNA(Ile)-dependent editing activities. One activity is designated as 'pretransfer' editing and involves the hydrolysis of activated Val-AMP. The other activity is designated 'posttransfer' editing and involves deacylation of mischarged Val-tRNA(Ile). The protein is Isoleucine--tRNA ligase of Lactiplantibacillus plantarum (strain ATCC BAA-793 / NCIMB 8826 / WCFS1) (Lactobacillus plantarum).